Here is a 393-residue protein sequence, read N- to C-terminus: S-adenosylmethionine synthase 2 (393 aa).

Glutamate 9 contributes to the Mg(2+) binding site. Histidine 15 contacts ATP. Glutamate 43 is a K(+) binding site. Residues glutamate 56 and glutamine 99 each contribute to the L-methionine site. ATP is bound by residues 167 to 169 (DGK), 235 to 238 (SGRF), aspartate 246, 252 to 253 (RM), alanine 269, lysine 273, and lysine 277. Position 246 (aspartate 246) interacts with L-methionine. Position 277 (lysine 277) interacts with L-methionine.

The protein belongs to the AdoMet synthase family. In terms of assembly, homotetramer. The cofactor is Mn(2+). Mg(2+) serves as cofactor. Requires Co(2+) as cofactor. It depends on K(+) as a cofactor.

The protein resides in the cytoplasm. It carries out the reaction L-methionine + ATP + H2O = S-adenosyl-L-methionine + phosphate + diphosphate. It participates in amino-acid biosynthesis; S-adenosyl-L-methionine biosynthesis; S-adenosyl-L-methionine from L-methionine: step 1/1. Catalyzes the formation of S-adenosylmethionine from methionine and ATP. The reaction comprises two steps that are both catalyzed by the same enzyme: formation of S-adenosylmethionine (AdoMet) and triphosphate, and subsequent hydrolysis of the triphosphate. The chain is S-adenosylmethionine synthase 2 (SAMS2) from Daucus carota (Wild carrot).